The primary structure comprises 134 residues: MRMLLHLSLLALGAAYVSAIAVQSPMNRLVAETLALLSTHRTLLIGDGNLMIPTPEHNNHQLCIEEVFQGIDTLKNRTVPGDAVEKLFRNLSLIKEHIDRQKKKCGGERWRVKKFLDYLQVFLGVINTEWTMES.

A signal peptide spans 1–19; sequence MRMLLHLSLLALGAAYVSA. N-linked (GlcNAc...) asparagine glycans are attached at residues Asn76 and Asn90.

Belongs to the IL-5 family. As to quaternary structure, homodimer; disulfide-linked. Interacts with IL5RA. Interacts with CSF2RB.

It is found in the secreted. Functionally, homodimeric cytokine expressed predominantly by T-lymphocytes and NK cells that plays an important role in the survival, differentiation, and chemotaxis of eosinophils. Also acts on activated and resting B-cells to induce immunoglobulin production, growth, and differentiation. Mechanistically, exerts its biological effects through a receptor composed of IL5RA subunit and the cytokine receptor common subunit beta/CSF2RB. Binding to the receptor leads to activation of various kinases including LYN, SYK and JAK2 and thereby propagates signals through the RAS-MAPK and JAK-STAT5 pathways respectively. The sequence is that of Interleukin-5 (IL5) from Felis catus (Cat).